Consider the following 358-residue polypeptide: Alanine racemase, biosynthetic (358 aa).

K34 functions as the Proton acceptor; specific for D-alanine in the catalytic mechanism. K34 is subject to N6-(pyridoxal phosphate)lysine. Residue R130 participates in substrate binding. Y254 acts as the Proton acceptor; specific for L-alanine in catalysis. Position 302 (M302) interacts with substrate.

This sequence belongs to the alanine racemase family. Pyridoxal 5'-phosphate serves as cofactor.

The catalysed reaction is L-alanine = D-alanine. It participates in amino-acid biosynthesis; D-alanine biosynthesis; D-alanine from L-alanine: step 1/1. It functions in the pathway cell wall biogenesis; peptidoglycan biosynthesis. Its function is as follows. Catalyzes the interconversion of L-alanine and D-alanine. Provides the D-alanine required for cell wall biosynthesis. The sequence is that of Alanine racemase, biosynthetic (alr) from Pseudomonas aeruginosa (strain ATCC 15692 / DSM 22644 / CIP 104116 / JCM 14847 / LMG 12228 / 1C / PRS 101 / PAO1).